We begin with the raw amino-acid sequence, 251 residues long: Ubiquinone/menaquinone biosynthesis C-methyltransferase UbiE (251 aa).

Residues threonine 74, aspartate 95, and 123 to 124 (NA) contribute to the S-adenosyl-L-methionine site.

This sequence belongs to the class I-like SAM-binding methyltransferase superfamily. MenG/UbiE family.

The enzyme catalyses a 2-demethylmenaquinol + S-adenosyl-L-methionine = a menaquinol + S-adenosyl-L-homocysteine + H(+). The catalysed reaction is a 2-methoxy-6-(all-trans-polyprenyl)benzene-1,4-diol + S-adenosyl-L-methionine = a 5-methoxy-2-methyl-3-(all-trans-polyprenyl)benzene-1,4-diol + S-adenosyl-L-homocysteine + H(+). It participates in quinol/quinone metabolism; menaquinone biosynthesis; menaquinol from 1,4-dihydroxy-2-naphthoate: step 2/2. Its pathway is cofactor biosynthesis; ubiquinone biosynthesis. Methyltransferase required for the conversion of demethylmenaquinol (DMKH2) to menaquinol (MKH2) and the conversion of 2-polyprenyl-6-methoxy-1,4-benzoquinol (DDMQH2) to 2-polyprenyl-3-methyl-6-methoxy-1,4-benzoquinol (DMQH2). The sequence is that of Ubiquinone/menaquinone biosynthesis C-methyltransferase UbiE from Shewanella sediminis (strain HAW-EB3).